The primary structure comprises 476 residues: ATP synthase subunit beta, chloroplastic (476 aa).

An ATP-binding site is contributed by 156–163 (GGAGVGKT).

The protein belongs to the ATPase alpha/beta chains family. As to quaternary structure, F-type ATPases have 2 components, CF(1) - the catalytic core - and CF(0) - the membrane proton channel. CF(1) has five subunits: alpha(3), beta(3), gamma(1), delta(1), epsilon(1). CF(0) has four main subunits: a(1), b(1), b'(1) and c(9-12).

It localises to the plastid. Its subcellular location is the chloroplast thylakoid membrane. The catalysed reaction is ATP + H2O + 4 H(+)(in) = ADP + phosphate + 5 H(+)(out). Functionally, produces ATP from ADP in the presence of a proton gradient across the membrane. The catalytic sites are hosted primarily by the beta subunits. This chain is ATP synthase subunit beta, chloroplastic, found in Fucus vesiculosus (Bladder wrack).